We begin with the raw amino-acid sequence, 181 residues long: UPF0397 protein SSU98_0390 (181 aa).

The next 5 membrane-spanning stretches (helical) occupy residues Val9–Pro29, Leu46–Leu66, Leu70–Gly90, Ile108–Pro128, and Leu147–Val167.

This sequence belongs to the UPF0397 family.

The protein localises to the cell membrane. This chain is UPF0397 protein SSU98_0390, found in Streptococcus suis (strain 98HAH33).